The sequence spans 930 residues: Isoleucine--tRNA ligase (930 aa).

A 'HIGH' region motif is present at residues 57-67 (PYANGNIHVGH). Glu554 is an L-isoleucyl-5'-AMP binding site. Residues 595-599 (KMSKS) carry the 'KMSKS' region motif. Lys598 contributes to the ATP binding site. Residues Cys888, Cys891, Cys908, and Cys911 each contribute to the Zn(2+) site.

Belongs to the class-I aminoacyl-tRNA synthetase family. IleS type 1 subfamily. Monomer. It depends on Zn(2+) as a cofactor.

It is found in the cytoplasm. It carries out the reaction tRNA(Ile) + L-isoleucine + ATP = L-isoleucyl-tRNA(Ile) + AMP + diphosphate. In terms of biological role, catalyzes the attachment of isoleucine to tRNA(Ile). As IleRS can inadvertently accommodate and process structurally similar amino acids such as valine, to avoid such errors it has two additional distinct tRNA(Ile)-dependent editing activities. One activity is designated as 'pretransfer' editing and involves the hydrolysis of activated Val-AMP. The other activity is designated 'posttransfer' editing and involves deacylation of mischarged Val-tRNA(Ile). In Streptococcus sanguinis (strain SK36), this protein is Isoleucine--tRNA ligase.